The following is a 155-amino-acid chain: Large ribosomal subunit protein uL13 (155 aa).

The protein belongs to the universal ribosomal protein uL13 family. Part of the 50S ribosomal subunit.

Its function is as follows. This protein is one of the early assembly proteins of the 50S ribosomal subunit, although it is not seen to bind rRNA by itself. It is important during the early stages of 50S assembly. The polypeptide is Large ribosomal subunit protein uL13 (Rickettsia typhi (strain ATCC VR-144 / Wilmington)).